We begin with the raw amino-acid sequence, 340 residues long: Glycerol-3-phosphate dehydrogenase [NAD(P)+] (340 aa).

NADPH contacts are provided by W11, R33, and K110. Sn-glycerol 3-phosphate-binding residues include K110, G144, and S146. NADPH is bound at residue A148. K199, D252, S262, R263, and N264 together coordinate sn-glycerol 3-phosphate. The Proton acceptor role is filled by K199. R263 contacts NADPH. The NADPH site is built by V287 and E289.

Belongs to the NAD-dependent glycerol-3-phosphate dehydrogenase family.

It localises to the cytoplasm. It carries out the reaction sn-glycerol 3-phosphate + NAD(+) = dihydroxyacetone phosphate + NADH + H(+). It catalyses the reaction sn-glycerol 3-phosphate + NADP(+) = dihydroxyacetone phosphate + NADPH + H(+). Its pathway is membrane lipid metabolism; glycerophospholipid metabolism. Its function is as follows. Catalyzes the reduction of the glycolytic intermediate dihydroxyacetone phosphate (DHAP) to sn-glycerol 3-phosphate (G3P), the key precursor for phospholipid synthesis. The polypeptide is Glycerol-3-phosphate dehydrogenase [NAD(P)+] (Polynucleobacter asymbioticus (strain DSM 18221 / CIP 109841 / QLW-P1DMWA-1) (Polynucleobacter necessarius subsp. asymbioticus)).